A 148-amino-acid chain; its full sequence is Large ribosomal subunit protein bL9 (148 aa).

It belongs to the bacterial ribosomal protein bL9 family.

In terms of biological role, binds to the 23S rRNA. The sequence is that of Large ribosomal subunit protein bL9 from Pseudomonas fluorescens (strain ATCC BAA-477 / NRRL B-23932 / Pf-5).